Here is a 161-residue protein sequence, read N- to C-terminus: NAD(P)H-quinone oxidoreductase subunit I, chloroplastic (161 aa).

2 consecutive 4Fe-4S ferredoxin-type domains span residues 55-84 and 95-124; these read GRIH…VDWK and LNYS…MTEE. [4Fe-4S] cluster contacts are provided by Cys64, Cys67, Cys70, Cys74, Cys104, Cys107, Cys110, and Cys114.

Belongs to the complex I 23 kDa subunit family. As to quaternary structure, NDH is composed of at least 16 different subunits, 5 of which are encoded in the nucleus. The cofactor is [4Fe-4S] cluster.

The protein resides in the plastid. It is found in the chloroplast thylakoid membrane. The catalysed reaction is a plastoquinone + NADH + (n+1) H(+)(in) = a plastoquinol + NAD(+) + n H(+)(out). It carries out the reaction a plastoquinone + NADPH + (n+1) H(+)(in) = a plastoquinol + NADP(+) + n H(+)(out). Functionally, NDH shuttles electrons from NAD(P)H:plastoquinone, via FMN and iron-sulfur (Fe-S) centers, to quinones in the photosynthetic chain and possibly in a chloroplast respiratory chain. The immediate electron acceptor for the enzyme in this species is believed to be plastoquinone. Couples the redox reaction to proton translocation, and thus conserves the redox energy in a proton gradient. The chain is NAD(P)H-quinone oxidoreductase subunit I, chloroplastic from Lotus japonicus (Lotus corniculatus var. japonicus).